A 214-amino-acid chain; its full sequence is Cysteine-rich venom protein LEI1 (214 aa).

Positions 1–18 (MIAFILLSLAAVLQQSFG) are cleaved as a signal peptide. One can recognise an SCP domain in the interval 37–165 (VNMHNSLRRS…YYSYFYVCQY (129 aa)). 5 cysteine pairs are disulfide-bonded: cysteine 74-cysteine 152, cysteine 91-cysteine 166, cysteine 147-cysteine 163, cysteine 185-cysteine 192, and cysteine 188-cysteine 197. One can recognise a ShKT domain in the interval 201–214 (CTVENKFTNCNTLV).

The protein belongs to the CRISP family. Expressed by the venom gland.

It is found in the secreted. Its function is as follows. Blocks contraction of smooth muscle elicited by high potassium-induced depolarization, but does not block caffeine-stimulated contraction. May target voltage-gated calcium channels on smooth muscle. In Leioheterodon madagascariensis (Malagasy giant hognose snake), this protein is Cysteine-rich venom protein LEI1.